We begin with the raw amino-acid sequence, 302 residues long: ATP synthase subunit b 1 (302 aa).

Residues 5 to 22 (WFTVIAQGINFLLLLWLL) traverse the membrane as a helical segment. Residues 278–302 (GLPENEGTDNPEANPPHAEAKIPHA) form a disordered region.

This sequence belongs to the ATPase B chain family. In terms of assembly, F-type ATPases have 2 components, F(1) - the catalytic core - and F(0) - the membrane proton channel. F(1) has five subunits: alpha(3), beta(3), gamma(1), delta(1), epsilon(1). F(0) has three main subunits: a(1), b(2) and c(10-14). The alpha and beta chains form an alternating ring which encloses part of the gamma chain. F(1) is attached to F(0) by a central stalk formed by the gamma and epsilon chains, while a peripheral stalk is formed by the delta and b chains.

Its subcellular location is the cell inner membrane. In terms of biological role, f(1)F(0) ATP synthase produces ATP from ADP in the presence of a proton or sodium gradient. F-type ATPases consist of two structural domains, F(1) containing the extramembraneous catalytic core and F(0) containing the membrane proton channel, linked together by a central stalk and a peripheral stalk. During catalysis, ATP synthesis in the catalytic domain of F(1) is coupled via a rotary mechanism of the central stalk subunits to proton translocation. Its function is as follows. Component of the F(0) channel, it forms part of the peripheral stalk, linking F(1) to F(0). In Pseudoalteromonas atlantica (strain T6c / ATCC BAA-1087), this protein is ATP synthase subunit b 1.